We begin with the raw amino-acid sequence, 250 residues long: ATP synthase subunit a (250 aa).

A run of 6 helical transmembrane segments spans residues 26–46, 84–104, 114–134, 143–163, 193–213, and 216–236; these read FTNA…FLYL, FFPM…LGMV, IIVT…YGFY, LFVP…IEII, FVAS…LPLI, and VALT…FAVL.

Belongs to the ATPase A chain family. F-type ATPases have 2 components, CF(1) - the catalytic core - and CF(0) - the membrane proton channel. CF(1) has five subunits: alpha(3), beta(3), gamma(1), delta(1), epsilon(1). CF(0) has three main subunits: a(1), b(2) and c(9-12). The alpha and beta chains form an alternating ring which encloses part of the gamma chain. CF(1) is attached to CF(0) by a central stalk formed by the gamma and epsilon chains, while a peripheral stalk is formed by the delta and b chains.

It is found in the cell inner membrane. Key component of the proton channel; it plays a direct role in the translocation of protons across the membrane. This Sinorhizobium medicae (strain WSM419) (Ensifer medicae) protein is ATP synthase subunit a.